A 405-amino-acid polypeptide reads, in one-letter code: Bifunctional enzyme IspD/IspF (405 aa).

Residues 1–240 form a 2-C-methyl-D-erythritol 4-phosphate cytidylyltransferase region; the sequence is MTLADKPVLS…KLLLDEPKYR (240 aa). The segment at 240-405 is 2-C-methyl-D-erythritol 2,4-cyclodiphosphate synthase; the sequence is RVGTGYDIHR…LLYKIAPLHN (166 aa). A divalent metal cation-binding residues include D246 and H248. 4-CDP-2-C-methyl-D-erythritol 2-phosphate contacts are provided by residues 246 to 248 and 277 to 278; these read DIH and HS. H285 contributes to the a divalent metal cation binding site. 4-CDP-2-C-methyl-D-erythritol 2-phosphate is bound by residues 299-301, 375-378, and R385; these read DIG and TTTE.

In the N-terminal section; belongs to the IspD/TarI cytidylyltransferase family. IspD subfamily. This sequence in the C-terminal section; belongs to the IspF family. A divalent metal cation is required as a cofactor.

The catalysed reaction is 2-C-methyl-D-erythritol 4-phosphate + CTP + H(+) = 4-CDP-2-C-methyl-D-erythritol + diphosphate. It carries out the reaction 4-CDP-2-C-methyl-D-erythritol 2-phosphate = 2-C-methyl-D-erythritol 2,4-cyclic diphosphate + CMP. It functions in the pathway isoprenoid biosynthesis; isopentenyl diphosphate biosynthesis via DXP pathway; isopentenyl diphosphate from 1-deoxy-D-xylulose 5-phosphate: step 2/6. It participates in isoprenoid biosynthesis; isopentenyl diphosphate biosynthesis via DXP pathway; isopentenyl diphosphate from 1-deoxy-D-xylulose 5-phosphate: step 4/6. In terms of biological role, bifunctional enzyme that catalyzes the formation of 4-diphosphocytidyl-2-C-methyl-D-erythritol from CTP and 2-C-methyl-D-erythritol 4-phosphate (MEP) (IspD), and catalyzes the conversion of 4-diphosphocytidyl-2-C-methyl-D-erythritol 2-phosphate (CDP-ME2P) to 2-C-methyl-D-erythritol 2,4-cyclodiphosphate (ME-CPP) with a corresponding release of cytidine 5-monophosphate (CMP) (IspF). The sequence is that of Bifunctional enzyme IspD/IspF from Wolbachia sp. subsp. Brugia malayi (strain TRS).